Consider the following 405-residue polypeptide: Putative phosphate permease PYRAB14010 (405 aa).

11 helical membrane passes run 3-23 (MDPW…AIGA), 44-64 (AVLI…KTVT), 82-102 (VLVY…VIAT), 114-134 (IIGG…VNWG), 138-158 (SVVL…FFIF), 181-201 (VWIG…VLHG), 207-227 (GVLK…SMIL), 264-284 (VANA…GMAG), 287-307 (VPVP…GVAT), 329-349 (FTID…GMPI), and 384-404 (FVTV…LWIV).

The protein belongs to the inorganic phosphate transporter (PiT) (TC 2.A.20) family.

The protein localises to the cell membrane. Its function is as follows. Potential transporter for phosphate. This chain is Putative phosphate permease PYRAB14010, found in Pyrococcus abyssi (strain GE5 / Orsay).